The sequence spans 156 residues: Small ribosomal subunit protein uS7 (156 aa).

This sequence belongs to the universal ribosomal protein uS7 family. In terms of assembly, part of the 30S ribosomal subunit. Contacts proteins S9 and S11.

Its function is as follows. One of the primary rRNA binding proteins, it binds directly to 16S rRNA where it nucleates assembly of the head domain of the 30S subunit. Is located at the subunit interface close to the decoding center, probably blocks exit of the E-site tRNA. This chain is Small ribosomal subunit protein uS7, found in Photorhabdus laumondii subsp. laumondii (strain DSM 15139 / CIP 105565 / TT01) (Photorhabdus luminescens subsp. laumondii).